The primary structure comprises 154 residues: Myoglobin (154 aa).

One can recognise a Globin domain in the interval glycine 2–lysine 148. Serine 4 carries the phosphoserine modification. Residue histidine 65 coordinates nitrite. Histidine 65 contacts O2. A Phosphothreonine modification is found at threonine 68. Residue histidine 94 participates in heme b binding.

This sequence belongs to the globin family. As to quaternary structure, monomeric.

The protein localises to the cytoplasm. Its subcellular location is the sarcoplasm. The enzyme catalyses Fe(III)-heme b-[protein] + nitric oxide + H2O = Fe(II)-heme b-[protein] + nitrite + 2 H(+). It catalyses the reaction H2O2 + AH2 = A + 2 H2O. Its function is as follows. Monomeric heme protein which primary function is to store oxygen and facilitate its diffusion within muscle tissues. Reversibly binds oxygen through a pentacoordinated heme iron and enables its timely and efficient release as needed during periods of heightened demand. Depending on the oxidative conditions of tissues and cells, and in addition to its ability to bind oxygen, it also has a nitrite reductase activity whereby it regulates the production of bioactive nitric oxide. Under stress conditions, like hypoxia and anoxia, it also protects cells against reactive oxygen species thanks to its pseudoperoxidase activity. The chain is Myoglobin (MB) from Halichoerus grypus (Gray seal).